The chain runs to 768 residues: DNA topoisomerase 4 subunit A (768 aa).

The region spanning 38–521 is the Topo IIA-type catalytic domain; the sequence is LPEVSDGQKP…AGRAVLTQTA (484 aa). The active-site O-(5'-phospho-DNA)-tyrosine intermediate is the Tyr126.

Belongs to the type II topoisomerase GyrA/ParC subunit family. ParC type 1 subfamily. Heterotetramer composed of ParC and ParE.

The protein resides in the cell membrane. It catalyses the reaction ATP-dependent breakage, passage and rejoining of double-stranded DNA.. Topoisomerase IV is essential for chromosome segregation. It relaxes supercoiled DNA. Performs the decatenation events required during the replication of a circular DNA molecule. This is DNA topoisomerase 4 subunit A from Neisseria gonorrhoeae.